The following is a 1420-amino-acid chain: Actin cytoskeleton-regulatory complex protein sla1 (1420 aa).

2 consecutive SH3 domains span residues 5–81 (PIIG…EAEP) and 82–139 (STKM…GMDA). The segment at 138-344 (DASSAPASQE…RAYDSSSSMG (207 aa)) is disordered. Positions 139–151 (ASSAPASQEPSAS) are enriched in low complexity. The segment covering 152–165 (GVNAPTVSAPNSMV) has biased composition (polar residues). Residues 173 to 185 (PPSAAAPATSLPS) are compositionally biased toward low complexity. 2 stretches are compositionally biased toward pro residues: residues 187–198 (YNPPPPPPPPPA) and 235–247 (LPAPPPPPPPTLP). Residues 250 to 271 (STNTSQLPMPSRNVNNLGSQVN) are compositionally biased toward polar residues. A compositionally biased stretch (pro residues) spans 272–286 (IPPPPATPSQPPRPP). The span at 287–301 (TNASTRSTGTSSSMA) shows a compositional bias: polar residues. Residues serine 309, serine 311, and serine 312 each carry the phosphoserine modification. Residues 326–336 (LRTDSHDDSRA) are compositionally biased toward basic and acidic residues. Position 454 is a phosphoserine (serine 454). The SH3 3 domain maps to 508-568 (AGQKMGTVLY…PSNFIKPDTE (61 aa)). Disordered stretches follow at residues 560–657 (SNFI…TDRT), 708–786 (YSRT…DKYD), and 902–1016 (EPAP…AQPT). Low complexity predominate over residues 572-587 (KSPPSSSKSGQGSSLS). Phosphoserine is present on residues serine 573 and serine 577. Basic residues predominate over residues 589 to 600 (RASKHESKHKRD). 2 stretches are compositionally biased toward basic and acidic residues: residues 601–636 (SKHEARPESKHESHRESKSAEKDKKDKKDKKEDSKR) and 709–742 (SRTERKKDTQKQSHDHGHSHSKSHDREKEKEKKK). Serine 927 bears the Phosphoserine mark. Threonine 929 is modified (phosphothreonine). Composition is skewed to basic and acidic residues over residues 969 to 980 (ISEEAKKPEAPS) and 991 to 1005 (EEQKKAPVEKKDAEK).

This sequence belongs to the SLA1 family. In terms of assembly, component of the PAN1 actin cytoskeleton-regulatory complex.

The protein resides in the cell membrane. It localises to the endosome membrane. The protein localises to the cytoplasm. It is found in the cytoskeleton. Its subcellular location is the actin patch. Functionally, component of the PAN1 actin cytoskeleton-regulatory complex required for the internalization of endosomes during actin-coupled endocytosis. The complex links the site of endocytosis to the cell membrane-associated actin cytoskeleton. Mediates uptake of external molecules and vacuolar degradation of plasma membrane proteins. Plays a role in the proper organization of the cell membrane-associated actin cytoskeleton and promotes its destabilization. The polypeptide is Actin cytoskeleton-regulatory complex protein sla1 (sla1) (Schizosaccharomyces pombe (strain 972 / ATCC 24843) (Fission yeast)).